Reading from the N-terminus, the 457-residue chain is Aromatic amino acid transport protein AroP (457 aa).

Residues 1–18 are Cytoplasmic-facing; sequence MMEGQQHGEQLKRGLKNR. The helical transmembrane segment at 19-39 threads the bilayer; the sequence is HIQLIALGGAIGTGLFLGSAS. Residues 40 to 42 lie on the Periplasmic side of the membrane; the sequence is VIQ. A helical transmembrane segment spans residues 43–63; sequence SAGPGIILGYAIAGFIAFLIM. Over 64–98 the chain is Cytoplasmic; sequence RQLGEMVVEEPVAGSFSHFAYKYWGSFAGFASGWN. A helical membrane pass occupies residues 99 to 119; that stretch reads YWVLYVLVAMAELTAVGKYIQ. The Periplasmic portion of the chain corresponds to 120 to 124; it reads FWYPE. Residues 125 to 145 traverse the membrane as a helical segment; sequence IPTWVSAAVFFVVINAINLTN. The Cytoplasmic portion of the chain corresponds to 146–147; the sequence is VK. The chain crosses the membrane as a helical span at residues 148–168; that stretch reads VFGEMEFWFAIIKVIAVVAMI. Residues 169–192 lie on the Periplasmic side of the membrane; the sequence is IFGGWLLFSGNGGPQATVSNLWDQ. A helical transmembrane segment spans residues 193-213; it reads GGFLPHGFTGLVMMMAIIMFS. Over 214–239 the chain is Cytoplasmic; that stretch reads FGGLELVGITAAEADNPEQSIPKATN. A helical membrane pass occupies residues 240–260; the sequence is QVIYRILIFYIGSLAVLLSLM. At 261-279 the chain is on the periplasmic side; sequence PWTRVTADTSPFVLIFHEL. Residues 280-300 traverse the membrane as a helical segment; sequence GDTFVANALNIVVLTAALSVY. Residues 301 to 330 are Cytoplasmic-facing; sequence NSCVYCNSRMLFGLAQQGNAPKALASVDKR. A helical membrane pass occupies residues 331–351; the sequence is GVPVNTILVSALVTALCVLIN. Over 352-359 the chain is Periplasmic; sequence YLAPESAF. The chain crosses the membrane as a helical span at residues 360–380; sequence GLLMALVVSALVINWAMISLA. Residues 381–402 are Cytoplasmic-facing; that stretch reads HMKFRRAKQEQGVVTRFPALLY. The helical transmembrane segment at 403 to 423 threads the bilayer; sequence PLGNWICLLFMAAVLVIMLMT. Residues 424 to 426 are Periplasmic-facing; it reads PGM. Residues 427–447 traverse the membrane as a helical segment; sequence AISVYLIPVWLIVLGIGYLFK. Residues 448-457 are Cytoplasmic-facing; the sequence is EKTAKAVKAH.

The protein belongs to the amino acid-polyamine-organocation (APC) superfamily. Amino acid transporter (AAT) (TC 2.A.3.1) family.

The protein resides in the cell inner membrane. It catalyses the reaction L-phenylalanine(in) + H(+)(in) = L-phenylalanine(out) + H(+)(out). It carries out the reaction L-tryptophan(in) + H(+)(in) = L-tryptophan(out) + H(+)(out). The catalysed reaction is L-tyrosine(in) + H(+)(in) = L-tyrosine(out) + H(+)(out). Strong, mutual inhibition of uptake by tyrosine, phenylalanine, and tryptophan. Transport is also inhibited by the aromatic analogs p-fluorophenylalanine, beta-2-thienylalanine and 5-methyltryptophan. In terms of biological role, permease that is involved in the active transport across the cytoplasmic membrane of all three aromatic amino acids, phenylalanine, tyrosine and tryptophan. The polypeptide is Aromatic amino acid transport protein AroP (Escherichia coli (strain K12)).